Consider the following 390-residue polypeptide: Lipid-A-disaccharide synthase (390 aa).

The protein belongs to the LpxB family.

It catalyses the reaction a lipid X + a UDP-2-N,3-O-bis[(3R)-3-hydroxyacyl]-alpha-D-glucosamine = a lipid A disaccharide + UDP + H(+). It participates in bacterial outer membrane biogenesis; LPS lipid A biosynthesis. In terms of biological role, condensation of UDP-2,3-diacylglucosamine and 2,3-diacylglucosamine-1-phosphate to form lipid A disaccharide, a precursor of lipid A, a phosphorylated glycolipid that anchors the lipopolysaccharide to the outer membrane of the cell. The sequence is that of Lipid-A-disaccharide synthase from Paramagnetospirillum magneticum (strain ATCC 700264 / AMB-1) (Magnetospirillum magneticum).